The sequence spans 205 residues: MPIFFYLFATLITISSVCVVLSKNSVYSVLWLIFAFINGAGLMILLGAEFLAMMLIVIYVGAVAVLFLFVIMMLDMHFNKTITQLKANLALSIFIALIMFADLVIIILLGTKNINFNSNVSFTITNNISNTKAIGGVLYTDFMLPFQMAGLILFVAMIACITLTLKKREGVKRQDISKQLRHNKENTVLMTKPILNKGVENIKYE.

The next 5 helical transmembrane spans lie at 1–21, 26–46, 54–74, 89–109, and 142–162; these read MPIFFYLFATLITISSVCVVL, VYSVLWLIFAFINGAGLMILL, MLIVIYVGAVAVLFLFVIMML, LALSIFIALIMFADLVIIILL, and FMLPFQMAGLILFVAMIACIT.

Belongs to the complex I subunit 6 family.

It is found in the cell membrane. It catalyses the reaction a quinone + NADH + 5 H(+)(in) = a quinol + NAD(+) + 4 H(+)(out). Functionally, NDH-1 shuttles electrons from NADH, via FMN and iron-sulfur (Fe-S) centers, to quinones in the respiratory chain. Couples the redox reaction to proton translocation (for every two electrons transferred, four hydrogen ions are translocated across the cytoplasmic membrane), and thus conserves the redox energy in a proton gradient. This chain is NADH-quinone oxidoreductase subunit J (nuoJ), found in Rickettsia conorii (strain ATCC VR-613 / Malish 7).